The primary structure comprises 272 residues: Shikimate dehydrogenase (NADP(+)) (272 aa).

Shikimate is bound by residues 14–16 and Thr61; that span reads SKS. The Proton acceptor role is filled by Lys65. Glu77 provides a ligand contact to NADP(+). The shikimate site is built by Asn86 and Asp102. Residues 126–130, 149–154, and Met213 contribute to the NADP(+) site; these read GAGGA and NRTASR. Residue Tyr215 participates in shikimate binding. Gly237 is an NADP(+) binding site.

The protein belongs to the shikimate dehydrogenase family. As to quaternary structure, homodimer.

It carries out the reaction shikimate + NADP(+) = 3-dehydroshikimate + NADPH + H(+). It functions in the pathway metabolic intermediate biosynthesis; chorismate biosynthesis; chorismate from D-erythrose 4-phosphate and phosphoenolpyruvate: step 4/7. In terms of biological role, involved in the biosynthesis of the chorismate, which leads to the biosynthesis of aromatic amino acids. Catalyzes the reversible NADPH linked reduction of 3-dehydroshikimate (DHSA) to yield shikimate (SA). The polypeptide is Shikimate dehydrogenase (NADP(+)) (Salmonella enteritidis PT4 (strain P125109)).